The primary structure comprises 700 residues: Elongation factor G (700 aa).

A tr-type G domain is found at 8 to 290; that stretch reads ERYRNIGISA…AVIDYLPSPV (283 aa). Residues 17–24, 88–92, and 142–145 contribute to the GTP site; these read AHIDAGKT, DTPGH, and NKMD.

Belongs to the TRAFAC class translation factor GTPase superfamily. Classic translation factor GTPase family. EF-G/EF-2 subfamily.

Its subcellular location is the cytoplasm. Functionally, catalyzes the GTP-dependent ribosomal translocation step during translation elongation. During this step, the ribosome changes from the pre-translocational (PRE) to the post-translocational (POST) state as the newly formed A-site-bound peptidyl-tRNA and P-site-bound deacylated tRNA move to the P and E sites, respectively. Catalyzes the coordinated movement of the two tRNA molecules, the mRNA and conformational changes in the ribosome. In Leptothrix cholodnii (strain ATCC 51168 / LMG 8142 / SP-6) (Leptothrix discophora (strain SP-6)), this protein is Elongation factor G.